A 287-amino-acid polypeptide reads, in one-letter code: ATP synthase gamma chain (287 aa).

This sequence belongs to the ATPase gamma chain family. F-type ATPases have 2 components, CF(1) - the catalytic core - and CF(0) - the membrane proton channel. CF(1) has five subunits: alpha(3), beta(3), gamma(1), delta(1), epsilon(1). CF(0) has three main subunits: a, b and c.

It localises to the cell inner membrane. In terms of biological role, produces ATP from ADP in the presence of a proton gradient across the membrane. The gamma chain is believed to be important in regulating ATPase activity and the flow of protons through the CF(0) complex. In Escherichia coli (strain 55989 / EAEC), this protein is ATP synthase gamma chain.